Reading from the N-terminus, the 281-residue chain is L-ornithine N(alpha)-acyltransferase (281 aa).

Belongs to the acetyltransferase family. OlsB subfamily.

The catalysed reaction is a (3R)-hydroxyacyl-[ACP] + L-ornithine = a lyso-ornithine lipid + holo-[ACP] + H(+). It functions in the pathway lipid metabolism. In terms of biological role, catalyzes the first step in the biosynthesis of ornithine lipids, which are phosphorus-free membrane lipids. Catalyzes the 3-hydroxyacyl-acyl carrier protein-dependent acylation of ornithine to form lyso-ornithine lipid (LOL). In Brucella abortus (strain 2308), this protein is L-ornithine N(alpha)-acyltransferase.